The following is a 140-amino-acid chain: Neuropeptide CCHamide-2 (140 aa).

The signal sequence occupies residues 1-22; that stretch reads MAQMYLAVTIIALLAISHGVSA. Cysteine 26 and cysteine 33 are joined by a disulfide. Position 37 is a histidine amide (histidine 37). Positions 41–140 are excised as a propeptide; the sequence is SGDTSAMDQL…PDDGYYIESL (100 aa).

As to expression, expressed in corpora cardiaca (CC), corpora allata (CA), antennal lobe (AL) and gnathal ganglion (GNG) (at protein level). Expression detected in few animals (at protein level).

The protein localises to the secreted. Its function is as follows. Ligand for the CCHamide-2 receptor CCHa2-R. This chain is Neuropeptide CCHamide-2, found in Agrotis ipsilon (Black cutworm moth).